The chain runs to 180 residues: Large ribosomal subunit protein uL5c (180 aa).

The protein belongs to the universal ribosomal protein uL5 family. As to quaternary structure, part of the 50S ribosomal subunit; contacts the 5S rRNA.

It is found in the plastid. It localises to the chloroplast. In terms of biological role, binds 5S rRNA, forms part of the central protuberance of the 50S subunit. In Tupiella akineta (Green alga), this protein is Large ribosomal subunit protein uL5c (rpl5).